Reading from the N-terminus, the 592-residue chain is MRLPTTLLLFIGALIFSGAGTVRSDASDHRYKDGDSVPLYANKVGPFHNPSETYRYFDLPFCIPEGVKDKKEALGEVLNGDRLVSAPYKLNFRDEKDSEVYCKKKLSREEVEHFRRAVEKDYYFQMYYDDLPIWGFIGKVDKESKSDPSEFKYFLYKHIQFEILYNKDRVIEINARMDPHSLVDLTEDKEVDAEFMYTVKWKETETSFEKRMDKYAMSSSLPHHLEIHWFSIINSCVTVLLLTGFLATILMRVLKNDFMKYAQDEEAADDQEETGWKYIHGDVFRFPKNKSLFAASLGSGTQLFTLTIFIFMLSLVGVFYPYNRGALFTALVVIYALTSGIAGYTASSFYCQLEGKNWVRNLLLTGGLFCGPLFLTFCFLNTVAIAYSATAALPFGTIIVIVLIWTLVTSPLLVLGGIAGKNSKAEFQAPVRTTKYPREIPPLPWYRSAVPQMAMAGFLPFSAIYIELYYIFASVWGHRIYTIYSILFIVFIILLIVTAFITVALTYFQLAAEDHEWWWRSFLCGGSTGLFIYAYCLYYYYARSDMSGFMQTSFFFGYMACICYGFFLMLGTVGFRAALLFVRHIYRSIKCE.

A signal peptide spans 1 to 19 (MRLPTTLLLFIGALIFSGA). The Lumenal segment spans residues 20–229 (GTVRSDASDH…SLPHHLEIHW (210 aa)). The helical transmembrane segment at 230 to 250 (FSIINSCVTVLLLTGFLATIL) threads the bilayer. Topologically, residues 251–302 (MRVLKNDFMKYAQDEEAADDQEETGWKYIHGDVFRFPKNKSLFAASLGSGTQ) are cytoplasmic. The helical transmembrane segment at 303-323 (LFTLTIFIFMLSLVGVFYPYN) threads the bilayer. Residues 324–325 (RG) lie on the Lumenal side of the membrane. Residues 326–346 (ALFTALVVIYALTSGIAGYTA) traverse the membrane as a helical segment. The Cytoplasmic segment spans residues 347–365 (SSFYCQLEGKNWVRNLLLT). A helical transmembrane segment spans residues 366–386 (GGLFCGPLFLTFCFLNTVAIA). Residues 387-397 (YSATAALPFGT) are Lumenal-facing. Residues 398-418 (IIVIVLIWTLVTSPLLVLGGI) traverse the membrane as a helical segment. Topologically, residues 419–452 (AGKNSKAEFQAPVRTTKYPREIPPLPWYRSAVPQ) are cytoplasmic. Residues 453-473 (MAMAGFLPFSAIYIELYYIFA) form a helical membrane-spanning segment. The Lumenal segment spans residues 474–485 (SVWGHRIYTIYS). The helical transmembrane segment at 486 to 506 (ILFIVFIILLIVTAFITVALT) threads the bilayer. Topologically, residues 507–521 (YFQLAAEDHEWWWRS) are cytoplasmic. Residues 522–542 (FLCGGSTGLFIYAYCLYYYYA) form a helical membrane-spanning segment. Topologically, residues 543–553 (RSDMSGFMQTS) are lumenal. Residues 554–574 (FFFGYMACICYGFFLMLGTVG) form a helical membrane-spanning segment. The Cytoplasmic segment spans residues 575–592 (FRAALLFVRHIYRSIKCE). An Endoplasmic reticulum export signal motif is present at residues 581-586 (FVRHIY). Residues 590–592 (KCE) carry the Golgi retention signal motif.

This sequence belongs to the nonaspanin (TM9SF) (TC 9.A.2) family.

It is found in the endosome membrane. The protein localises to the golgi apparatus membrane. The chain is Transmembrane 9 superfamily member 3 from Arabidopsis thaliana (Mouse-ear cress).